A 101-amino-acid chain; its full sequence is MAITALPSADGQELTIQIQGRFDFGAHQDFRDAYERVAITPRRYVVDLRNATYLDSSALGMLLLLRDHAGGENAQISLANCSPEVRKILAISNFEQLFKIS.

The STAS domain occupies 14–101; that stretch reads LTIQIQGRFD…SNFEQLFKIS (88 aa).

In terms of processing, phosphorylated on a serine residue, possibly on Ser-56.

It is found in the secreted. In Pseudomonas aeruginosa (strain UCBPP-PA14), this protein is STAS-domain containing protein PA14_20770.